We begin with the raw amino-acid sequence, 173 residues long: MADKVAVLDPEPITLLDTEDEPGISQSRRSSIANSNFYIERAFVTNCTIISGERSTPKFAVWKVTAVLHPLNPNSSGSYRIHTYKRYSDFVEFRNALLDRVRTKRPASVSEIPELPPPVKWYYSWKYNEINLNKEWLANRRKGLELFINQVLLNGNIVDIAKDLVIQFLRPRK.

The PX domain maps to 40-173 (ERAFVTNCTI…LVIQFLRPRK (134 aa)).

It belongs to the YPT35 family.

It localises to the endosome membrane. The protein resides in the vacuole membrane. Functionally, recruits the lipid transfer protein VPS13 to endosomal and vacuolar membranes. The chain is Endosomal/vacuolar adapter protein YPT35 (YPT35) from Candida glabrata (strain ATCC 2001 / BCRC 20586 / JCM 3761 / NBRC 0622 / NRRL Y-65 / CBS 138) (Yeast).